The sequence spans 512 residues: SNF1-related protein kinase catalytic subunit alpha KIN11 (512 aa).

The Protein kinase domain maps to 20 to 272 (YKLGKTLGIG…IPEIRQHRWF (253 aa)). ATP-binding positions include 26–34 (LGIGSFGKV) and Lys49. Residue Asp143 is the Proton acceptor of the active site. Residue Ser165 is modified to Phosphoserine. Residue Thr176 is modified to Phosphothreonine; by GRIK1 or GRIK2. Positions 291-391 (AKKINEEIVQ…GARSQVPVDR (101 aa)) are auto-inhibitory domain (AID). Residues 293–333 (KINEEIVQEVVNMGFDRNQVLESLRNRTQNDATVTYYLLLD) enclose the UBA domain. The tract at residues 295 to 512 (NEEIVQEVVN…AAFLTELRVI (218 aa)) is regulatory domain (RD). Positions 392-512 (KWALGLQSHA…AAFLTELRVI (121 aa)) are PPI. Residues 399–512 (SHAHPREIMN…AAFLTELRVI (114 aa)) are interaction with PAD1 and SKP1. One can recognise a KA1 domain in the interval 463 to 511 (AMTSPTVIKFELQLYKAREEKYLLDIQRVNGPQFLFLDLCAAFLTELRV).

Belongs to the protein kinase superfamily. CAMK Ser/Thr protein kinase family. SNF1 subfamily. As to quaternary structure, subunit of a probable heterotrimeric complex consisting of an alpha catalytic (KIN10 or KIN11) subunit, and a beta (KINB) and a gamma (KING or SNF4) non-catalytic regulatory subunits. Interacts with KINB2, KINB3, SNF4 and probably with KINB1 and KING1. Interacts with SKP1/ASK1, PAD1 and the N-terminus of PRL1. Potential subunit of a SCF ubiquitin ligase complex consisting of a SNF1-related protein kinase, SKP1 and CUL1. The association of the SCF complex with the proteasome may be mediated by PAD1 and seems to be inhibited by the interaction with PRL1. Interacts with DSP4. Interacts with the begomovirus AL2 protein and the curtovirus L2 protein. Interacts with ATAF1. Interacts with CIPK14. Interacts with FLZ proteins through their FLZ-type zinc finger domains. Interacts with GEBP/STKR1. Interacts with REM4.1 and REM4.2. Interacts with ADK2. Interacts with IDD8. Interacts with FLZ3, FLZ9, TCP3, TCP13, HB21/ZHD3 and HB23/ZHD10. Interacts with WRI1. Interacts with IPK2b. Interacts with FLZ6 and FLZ10. In terms of processing, sumoylated by SIZ1. Post-translationally, phosphorylated at Thr-176 under submergence. Autophosphorylated. Phosphorylated at Thr-176 by GRIK1/SNAK2 and GRIK2/SNAK1. As to expression, expressed in roots, shoots, flower buds, flowers, siliques and leaves. Restrictly expressed to the base of the leaf, the vascular tissue, and the hydathodes.

Its subcellular location is the plastid. The protein resides in the chloroplast. The protein localises to the cytoplasm. It is found in the endoplasmic reticulum. It carries out the reaction L-seryl-[protein] + ATP = O-phospho-L-seryl-[protein] + ADP + H(+). The enzyme catalyses L-threonyl-[protein] + ATP = O-phospho-L-threonyl-[protein] + ADP + H(+). Inactivated by the begomovirus AL2 protein or the curtovirus L2 protein. Activated by phosphorylation at Thr-176 by GRIK1/SNAK2 and GRIK2/SNAK1. Inhibited by trehalose-6-phosphate. Functionally, catalytic subunit of the probable trimeric SNF1-related protein kinase (SnRK) complex, a central regulator of cellular energy homeostasis, which, in response to seemingly unrelated darkness, sugar and stress conditions, activates energy-producing pathways and inhibits energy-consuming processes. May play a role in a signal transduction cascade regulating gene expression and carbohydrate metabolism in higher plants. The SnRK complex may also be involved in the regulation of fatty acid synthesis by phosphorylation of acetyl-CoA carboxylase and in assimilation of nitrogen by phosphorylating nitrate reductase. In vitro, KIN11 exhibits kinase activity on sucrose phosphate synthase and the kinase activity is inhibited by PRL1. May be a subunit of a SCF ubiquitin ligase complex and thus be involved in proteasomal ubiquitination. Involved in innate antiviral defenses. Phosphorylates REM4.1 in vitro. Phosphorylates ADK2 in vitro. The sequence is that of SNF1-related protein kinase catalytic subunit alpha KIN11 from Arabidopsis thaliana (Mouse-ear cress).